A 395-amino-acid chain; its full sequence is Tyrosine--tRNA ligase 2 (395 aa).

Residues 42–51 (PTAPDIHLGH) carry the 'HIGH' region motif. Positions 226–230 (KMSKS) match the 'KMSKS' region motif. Lys-229 contacts ATP. In terms of domain architecture, S4 RNA-binding spans 334–395 (TPMANLLKEA…KRKFARITIA (62 aa)).

It belongs to the class-I aminoacyl-tRNA synthetase family. TyrS type 2 subfamily. Homodimer.

Its subcellular location is the cytoplasm. The enzyme catalyses tRNA(Tyr) + L-tyrosine + ATP = L-tyrosyl-tRNA(Tyr) + AMP + diphosphate + H(+). In terms of biological role, catalyzes the attachment of tyrosine to tRNA(Tyr) in a two-step reaction: tyrosine is first activated by ATP to form Tyr-AMP and then transferred to the acceptor end of tRNA(Tyr). The chain is Tyrosine--tRNA ligase 2 from Vibrio vulnificus (strain CMCP6).